A 370-amino-acid polypeptide reads, in one-letter code: N-acetyldiaminopimelate deacetylase (370 aa).

Aspartate 67 is a catalytic residue. Glutamate 126 acts as the Proton acceptor in catalysis.

It belongs to the peptidase M20A family. N-acetyldiaminopimelate deacetylase subfamily.

The enzyme catalyses N-acetyl-(2S,6S)-2,6-diaminopimelate + H2O = (2S,6S)-2,6-diaminopimelate + acetate. The protein operates within amino-acid biosynthesis; L-lysine biosynthesis via DAP pathway; LL-2,6-diaminopimelate from (S)-tetrahydrodipicolinate (acetylase route): step 3/3. Functionally, catalyzes the conversion of N-acetyl-diaminopimelate to diaminopimelate and acetate. The protein is N-acetyldiaminopimelate deacetylase of Exiguobacterium sibiricum (strain DSM 17290 / CCUG 55495 / CIP 109462 / JCM 13490 / 255-15).